Consider the following 376-residue polypeptide: Actin-related protein T1 (376 aa).

The protein belongs to the actin family. As to expression, in skin, expressed in the basal, spinous and granular layers of the epidermis. Also expressed in hair follicles, sebaceaous glands, eccrine sweat glands and semen.

Its subcellular location is the cytoplasm. The protein localises to the cytoskeleton. It is found in the nucleus. It localises to the cytoplasmic vesicle. The protein resides in the secretory vesicle. Its subcellular location is the acrosome. In terms of biological role, negatively regulates the Hedgehog (SHH) signaling. Binds to the promoter of the SHH signaling mediator, GLI1, and inhibits its expression. The sequence is that of Actin-related protein T1 from Homo sapiens (Human).